The primary structure comprises 93 residues: Large ribosomal subunit protein bL36m (93 aa).

The transit peptide at 1–35 (MFLQTLRLTMPRMFLHMKPSPITITRACTVPSLLS) directs the protein to the mitochondrion.

The protein belongs to the bacterial ribosomal protein bL36 family. Component of the mitochondrial large ribosomal subunit (mt-LSU). Mature yeast 74S mitochondrial ribosomes consist of a small (37S) and a large (54S) subunit. The 37S small subunit contains a 15S ribosomal RNA (15S mt-rRNA) and 34 different proteins. The 54S large subunit contains a 21S rRNA (21S mt-rRNA) and 46 different proteins. bL36m has a zinc binding site.

It localises to the mitochondrion. Component of the mitochondrial ribosome (mitoribosome), a dedicated translation machinery responsible for the synthesis of mitochondrial genome-encoded proteins, including at least some of the essential transmembrane subunits of the mitochondrial respiratory chain. The mitoribosomes are attached to the mitochondrial inner membrane and translation products are cotranslationally integrated into the membrane. bL36m may be involved in a process influencing telomere capping. The polypeptide is Large ribosomal subunit protein bL36m (RTC6) (Saccharomyces cerevisiae (strain ATCC 204508 / S288c) (Baker's yeast)).